The chain runs to 602 residues: Elongation factor 4 (602 aa).

One can recognise a tr-type G domain in the interval 2 to 184 (KKIRNFAIIA…RIVRDIPPPK (183 aa)). GTP-binding positions include 14-19 (DHGKST) and 131-134 (NKID).

Belongs to the TRAFAC class translation factor GTPase superfamily. Classic translation factor GTPase family. LepA subfamily.

It is found in the cell membrane. It catalyses the reaction GTP + H2O = GDP + phosphate + H(+). Its function is as follows. Required for accurate and efficient protein synthesis under certain stress conditions. May act as a fidelity factor of the translation reaction, by catalyzing a one-codon backward translocation of tRNAs on improperly translocated ribosomes. Back-translocation proceeds from a post-translocation (POST) complex to a pre-translocation (PRE) complex, thus giving elongation factor G a second chance to translocate the tRNAs correctly. Binds to ribosomes in a GTP-dependent manner. This chain is Elongation factor 4, found in Baumannia cicadellinicola subsp. Homalodisca coagulata.